Reading from the N-terminus, the 1858-residue chain is Inactive histone-lysine N-methyltransferase 2E (1858 aa).

Residues 63-66 carry the HCFC1-binding motif (HBM) motif; the sequence is DHNY. The segment at 118-166 adopts a PHD-type zinc-finger fold; sequence VTRCICGFTHDDGYMICCDKCSVWQHIDCMGIDRQHIPDTYLCERCQPR. The Zn(2+) site is built by C121, C123, C135, C138, H143, C146, C160, and C163. Residues 217-269 form a disordered region; the sequence is ASRVSKVNDKRRKKSGEKEQHISKCKKAFREGSRKSSRVKGSAPEIDPSSDGS. Residues 232 to 250 are compositionally biased toward basic and acidic residues; that stretch reads GEKEQHISKCKKAFREGSR. Positions 330 to 447 constitute an SET domain; it reads PPVESHIQKN…KGTEITIAFD (118 aa). Residue S435 is glycosylated (O-linked (GlcNAc) serine). Residue T440 is glycosylated (O-linked (GlcNAc) threonine). The interval 475–530 is disordered; that stretch reads SESMENINSGYETRRKKGKKDKDISKEKDTQNQNITLDCEGTTNKMKSPETKQRKL. The segment covering 494–504 has biased composition (basic and acidic residues); sequence KDKDISKEKDT. Positions 505 to 520 are enriched in polar residues; the sequence is QNQNITLDCEGTTNKM. Residues 559–615 are a coiled coil; that stretch reads VEMESEEQIAERKRKMTREERKMEAILQAFARLEKREKRREQALERISTAKTEVKTE. The residue at position 623 (S623) is a Phosphoserine. Positions 630 to 687 are disordered; the sequence is EQAKEENASKPTPAKVNRTKQRKSFSRSRTHIGQQRRRHRTVSMCSDIQPSSPDIEVT. Positions 646–670 are enriched in basic residues; sequence NRTKQRKSFSRSRTHIGQQRRRHRT. Residues 672–687 are compositionally biased toward polar residues; it reads SMCSDIQPSSPDIEVT. Phosphoserine is present on residues S837 and S845. 2 stretches are compositionally biased toward low complexity: residues 887–901 and 933–957; these read TSTPTPSPYATPTHT and PVTPVTPGTPGNTMHFENISSPESS. Disordered regions lie at residues 887–960 and 1039–1068; these read TSTP…SPEI and LETPAHDRAEPNSQLDSTHSGRGTMYSSWV. Over residues 1039-1048 the composition is skewed to basic and acidic residues; that stretch reads LETPAHDRAE. A compositionally biased stretch (polar residues) spans 1049–1068; the sequence is PNSQLDSTHSGRGTMYSSWV. S1070 is subject to Phosphoserine. Disordered regions lie at residues 1164 to 1561 and 1581 to 1835; these read KRQR…QNQQ and VFTS…PVPG. Polar residues-rich tracts occupy residues 1186–1206 and 1222–1235; these read PHASGSLSNNGDGCASSNDNG and TVYNATSEETSNNC. Position 1273 is a phosphoserine (S1273). A compositionally biased stretch (basic and acidic residues) spans 1273-1282; the sequence is SDHRKDKDSG. 2 stretches are compositionally biased toward low complexity: residues 1285–1303 and 1349–1362; these read SPCVSCSPSHVQSSPSSHS and KSPPKMSKPGSPGS. Position 1359 is a phosphoserine (S1359). Composition is skewed to polar residues over residues 1400–1432 and 1506–1542; these read QQKQLSNNNQALSKNHPPQTHVRNSSEQLSQKL and LPANTQQATSGTLFTQTPSGQSSATYSQFNQQSLNST. Pro residues predominate over residues 1543–1553; it reads APPPPPPPPPS. Residues 1581-1599 are compositionally biased toward polar residues; that stretch reads VFTSGPNQALPGTTSQQTV. The span at 1626 to 1637 shows a compositional bias: pro residues; it reads VPPPPPPPPAPG. Residues 1642–1651 show a composition bias toward polar residues; sequence QQPNSHQQHS. Over residues 1677-1687 the composition is skewed to pro residues; sequence LPPPPPPPGPA. Residues 1698–1711 are compositionally biased toward polar residues; that stretch reads TGLQGLQAQHQHVV. A compositionally biased stretch (pro residues) spans 1714–1724; sequence APPPPPPPPPS. Residues 1798-1808 show a composition bias toward polar residues; that stretch reads QGPNSIPTPTA.

It belongs to the class V-like SAM-binding methyltransferase superfamily. Histone-lysine methyltransferase family. TRX/MLL subfamily. Component of a complex composed of KMT2E (isoform 3), OGT and USP7; the complex stabilizes KMT2E, preventing KMT2E ubiquitination and proteasomal-mediated degradation. Isoform 3 interacts (via N-terminus) with OGT (via TRP repeats). Isoform 3 interacts with deubiquitinating enzyme USP7 (via MATH domain). Isoform 3 interacts (via HBM motif) with HCFC1 (via Kelch domain). Isoform 3 interacts with E2F1; the interaction is probably indirect and is mediated via HCFC1. Ubiquitinated. Deubiquitinated by USP7. In terms of processing, O-glycosylated at Ser-435 and Thr-440 in the SET domain by OGT which probably prevents KMT2E proteasomal-mediated degradation. In terms of tissue distribution, widely expressed in both adult and fetal tissues. Highest levels of expression observed in fetal thymus and kidney and in adult hematopoietic tissues, jejunum and cerebellum. Isoform NKp44L: Not detected on circulating cells from healthy individuals, but is expressed on a large panel of tumor and transformed cells.

Its subcellular location is the chromosome. It localises to the cytoplasm. It is found in the cytoskeleton. The protein localises to the microtubule organizing center. The protein resides in the centrosome. Its subcellular location is the nucleus speckle. It localises to the nucleus. It is found in the nucleoplasm. The protein localises to the cell membrane. Functionally, associates with chromatin regions downstream of transcriptional start sites of active genes and thus regulates gene transcription. Chromatin interaction is mediated via the binding to tri-methylated histone H3 at 'Lys-4' (H3K4me3). Key regulator of hematopoiesis involved in terminal myeloid differentiation and in the regulation of hematopoietic stem cell (HSCs) self-renewal by a mechanism that involves DNA methylation. Also acts as an important cell cycle regulator, participating in cell cycle regulatory network machinery at multiple cell cycle stages including G1/S transition, S phase progression and mitotic entry. Recruited to E2F1 responsive promoters by HCFC1 where it stimulates tri-methylation of histone H3 at 'Lys-4' and transcriptional activation and thereby facilitates G1 to S phase transition. During myoblast differentiation, required to suppress inappropriate expression of S-phase-promoting genes and maintain expression of determination genes in quiescent cells. In terms of biological role, cellular ligand for NCR2/NKp44, may play a role as a danger signal in cytotoxicity and NK-cell-mediated innate immunity. The protein is Inactive histone-lysine N-methyltransferase 2E (KMT2E) of Homo sapiens (Human).